A 104-amino-acid chain; its full sequence is Iron-sulfur cluster assembly protein CyaY (104 aa).

This sequence belongs to the frataxin family.

In terms of biological role, involved in iron-sulfur (Fe-S) cluster assembly. May act as a regulator of Fe-S biogenesis. In Tolumonas auensis (strain DSM 9187 / NBRC 110442 / TA 4), this protein is Iron-sulfur cluster assembly protein CyaY.